Consider the following 104-residue polypeptide: uncharacterized protein (104 aa).

This is an uncharacterized protein from Invertebrate iridescent virus 3 (IIV-3).